We begin with the raw amino-acid sequence, 503 residues long: Nondiscriminating glutamyl-tRNA synthetase EARS2, mitochondrial (503 aa).

The N-terminal 22 residues, methionine 1 to phenylalanine 22, are a transit peptide targeting the mitochondrion. Position 21 to 23 (arginine 21 to alanine 23) interacts with L-glutamate. The 'HIGH' region signature appears at proline 26–glycine 34. Histidine 31 is an ATP binding site. L-glutamate contacts are provided by residues glutamate 57, tyrosine 209–serine 213, and arginine 227. Residues glutamate 230 and lysine 265–arginine 269 contribute to the ATP site. The 'KMSKS' region motif lies at lysine 265–arginine 269.

It belongs to the class-I aminoacyl-tRNA synthetase family. Glutamate--tRNA ligase type 1 subfamily.

It localises to the mitochondrion matrix. The enzyme catalyses tRNA(Glx) + L-glutamate + ATP = L-glutamyl-tRNA(Glx) + AMP + diphosphate. It catalyses the reaction tRNA(Glu) + L-glutamate + ATP = L-glutamyl-tRNA(Glu) + AMP + diphosphate. It carries out the reaction tRNA(Gln) + L-glutamate + ATP = L-glutamyl-tRNA(Gln) + AMP + diphosphate. Non-discriminating glutamyl-tRNA synthetase that catalyzes aminoacylation of both mitochondrial tRNA(Glu) and tRNA(Gln) and participates in RNA aminoacylation for mitochondrial protein translation. Attachs glutamate to tRNA(Glu) or tRNA(Gln) in a two-step reaction: glutamate is first activated by ATP to form Glu-AMP and then transferred to the acceptor end of tRNA(Glu) or tRNA(Gln). This chain is Nondiscriminating glutamyl-tRNA synthetase EARS2, mitochondrial, found in Danio rerio (Zebrafish).